We begin with the raw amino-acid sequence, 186 residues long: Putative 5'(3')-deoxyribonucleotidase (186 aa).

Asp6 functions as the Nucleophile in the catalytic mechanism. Residues Asp6, Asp8, and Asp137 each coordinate Mg(2+). The Proton donor role is filled by Asp8.

Belongs to the 5'(3')-deoxyribonucleotidase family. Mg(2+) is required as a cofactor.

Dephosphorylates the 5' and 2'(3')-phosphates of deoxyribonucleotides. The protein is Putative 5'(3')-deoxyribonucleotidase of Bordetella bronchiseptica (strain ATCC BAA-588 / NCTC 13252 / RB50) (Alcaligenes bronchisepticus).